The primary structure comprises 256 residues: D-aminoacyl-tRNA deacylase (256 aa).

This sequence belongs to the DtdA deacylase family. As to quaternary structure, monomer. The cofactor is Zn(2+).

It catalyses the reaction a D-aminoacyl-tRNA + H2O = a tRNA + a D-alpha-amino acid + H(+). It carries out the reaction glycyl-tRNA(Ala) + H2O = tRNA(Ala) + glycine + H(+). Its function is as follows. D-aminoacyl-tRNA deacylase with broad substrate specificity. By recycling D-aminoacyl-tRNA to D-amino acids and free tRNA molecules, this enzyme counteracts the toxicity associated with the formation of D-aminoacyl-tRNA entities in vivo. The polypeptide is D-aminoacyl-tRNA deacylase (Thermoplasma volcanium (strain ATCC 51530 / DSM 4299 / JCM 9571 / NBRC 15438 / GSS1)).